Consider the following 370-residue polypeptide: Biotin synthase (370 aa).

A Radical SAM core domain is found at 50–276; sequence FSDGTVDACS…IAVYRFLHPE (227 aa). 3 residues coordinate [4Fe-4S] cluster: C68, C72, and C75. C208 and R280 together coordinate [2Fe-2S] cluster. A disordered region spans residues 328-370; the sequence is AGLEPNREANTFDPESVKARHRSPAAETASNANRTNATTETDD. A compositionally biased stretch (low complexity) spans 352-370; it reads AAETASNANRTNATTETDD.

This sequence belongs to the radical SAM superfamily. Biotin synthase family. In terms of assembly, homodimer. [4Fe-4S] cluster serves as cofactor. Requires [2Fe-2S] cluster as cofactor.

It catalyses the reaction (4R,5S)-dethiobiotin + (sulfur carrier)-SH + 2 reduced [2Fe-2S]-[ferredoxin] + 2 S-adenosyl-L-methionine = (sulfur carrier)-H + biotin + 2 5'-deoxyadenosine + 2 L-methionine + 2 oxidized [2Fe-2S]-[ferredoxin]. Its pathway is cofactor biosynthesis; biotin biosynthesis; biotin from 7,8-diaminononanoate: step 2/2. Catalyzes the conversion of dethiobiotin (DTB) to biotin by the insertion of a sulfur atom into dethiobiotin via a radical-based mechanism. This is Biotin synthase from Natronomonas pharaonis (strain ATCC 35678 / DSM 2160 / CIP 103997 / JCM 8858 / NBRC 14720 / NCIMB 2260 / Gabara) (Halobacterium pharaonis).